Reading from the N-terminus, the 316-residue chain is Glutathione synthetase (316 aa).

Residues Asn123–Glu309 enclose the ATP-grasp domain. Phe149–Gly206 lines the ATP pocket. Residues Glu280 and Asn282 each contribute to the Mg(2+) site.

The protein belongs to the prokaryotic GSH synthase family. Mg(2+) serves as cofactor. The cofactor is Mn(2+).

The enzyme catalyses gamma-L-glutamyl-L-cysteine + glycine + ATP = glutathione + ADP + phosphate + H(+). The protein operates within sulfur metabolism; glutathione biosynthesis; glutathione from L-cysteine and L-glutamate: step 2/2. This chain is Glutathione synthetase, found in Wigglesworthia glossinidia brevipalpis.